A 530-amino-acid polypeptide reads, in one-letter code: Amidase FVEG_08295 (530 aa).

Residues K138 and S214 each act as charge relay system in the active site. Residues S214 and 235–238 each bind substrate; that span reads IAGS. S238 (acyl-ester intermediate) is an active-site residue.

The protein belongs to the amidase family.

It catalyses the reaction a monocarboxylic acid amide + H2O = a monocarboxylate + NH4(+). The protein operates within xenobiotic degradation. In terms of biological role, amidase; part of the Fusarium detoxification of benzoxazolinone cluster 1 (FDB1) involved in the degradation of benzoxazolinones produced by the host plant. Maize, wheat, and rye produce the 2 benzoxazinone phytoanticipins 2,4-dihy-droxy-7-methoxy-1,4-benzoxazin-3-one (DIMBOA) and 2,4-dihydroxy-1,4-benzoxazin-3-one (DIBOA) that, due to their inherent instability once released, spontaneously degrade to the more stable corresponding benzoxazolinones, 6-methoxy-2-benzoxazolinone (MBOA) and 2-benzoxazolinone (BOA), respectively. The first step in the detoxification of benzoxazolinones involves the hydrolysis of the cyclic ester bond of benzoxazolinones by the FDB1 cluster gamma-lactamase MBL1 to aminophenols. MBL1 is able to convert BOA into 2-aminophenol (2-AP), as well as MBOA into 5-methoxy-2-aminophenol (2-AMP). The FDB2 cluster N-malonyltransferase FDB2/NAT1 then metabolizes aminophenols via N-malonylation to non-toxic malonamic acids. FDB2/NAT1 converts 2-AP into N-(2-hydroxyphenyl) malonamic acid (HPMA) and 2-AMP into N-(2-hydroxy-4-methoxyphenyl) malonamic acid (HMPMA). The duplicated dienlactone hydrolases DLH1 and DLH2 may provide redundant function for hydrolyzing the lactone moiety in the BOA molecule. The roles of the amidases an other enzymes encoded by the 2 FDB clusters have not been identified so far. The chain is Amidase FVEG_08295 from Gibberella moniliformis (strain M3125 / FGSC 7600) (Maize ear and stalk rot fungus).